Consider the following 221-residue polypeptide: uncharacterized protein (221 aa).

Positions 77–96 form a DNA-binding region, H-T-H motif; sequence YRERAVELGVPERAILVEPN.

This sequence to E.coli YdcF.

Functionally, the imp locus inhibits the extrachromosomal maintenance of the streptomyces plasmid SLP1. May function as a transcriptional activator. This is an uncharacterized protein from Streptomyces coelicolor (strain ATCC BAA-471 / A3(2) / M145).